A 447-amino-acid polypeptide reads, in one-letter code: Succinate--CoA ligase [ADP-forming] subunit beta, mitochondrial (447 aa).

The N-terminal 34 residues, 1 to 34, are a transit peptide targeting the mitochondrion; sequence MFKLGRNRALASAFAATSRAPLASRLPSVSQQQR. Positions 45–287 constitute an ATP-grasp domain; sequence ADLLRQYGIG…TTQEDPDEVR (243 aa). ATP-binding positions include Lys-82, 89-91, and Glu-150; that span reads GRG. Positions 242 and 256 each coordinate Mg(2+). Residues Asn-307 and 364-366 each bind substrate; that span reads GIV.

The protein belongs to the succinate/malate CoA ligase beta subunit family. In terms of assembly, heterodimer of an alpha and a beta subunit. The cofactor is Mg(2+).

Its subcellular location is the mitochondrion. It catalyses the reaction succinate + ATP + CoA = succinyl-CoA + ADP + phosphate. It functions in the pathway carbohydrate metabolism; tricarboxylic acid cycle; succinate from succinyl-CoA (ligase route): step 1/1. Its function is as follows. Succinyl-CoA synthetase functions in the citric acid cycle (TCA), coupling the hydrolysis of succinyl-CoA to the synthesis of ATP and thus represents the only step of substrate-level phosphorylation in the TCA. The beta subunit provides nucleotide specificity of the enzyme and binds the substrate succinate, while the binding sites for coenzyme A and phosphate are found in the alpha subunit. This Neurospora crassa (strain ATCC 24698 / 74-OR23-1A / CBS 708.71 / DSM 1257 / FGSC 987) protein is Succinate--CoA ligase [ADP-forming] subunit beta, mitochondrial.